The primary structure comprises 480 residues: Dimethyl-sulfide monooxygenase (480 aa).

FMN-binding residues include D58, T104, H154, Y158, and S230. The tract at residues 423–480 is disordered; the sequence is QDSYKPGSLRRKLIGTNDGRVESTHPAAQYRDAYVGKESVADRTQPSPFANAKAPVAE.

It belongs to the NtaA/SnaA/DszA monooxygenase family. In terms of assembly, heterodimer of 2 subunits, DmoA and DmoB. FMN serves as cofactor.

It catalyses the reaction dimethyl sulfide + NADH + O2 + H(+) = methanethiol + formaldehyde + NAD(+) + H2O. Inhibited by umbelliferone, 8-anilinonaphthalenesulfonate, a range of metal-chelating agents, and Hg(2+), Cd(2+) and Pb(2+) ions. Monooxygenase that mediates oxidation of dimethyl sulfide, the first step in dimethyl sulfide degradation pathway. Has much lower activity with diethyl sulfide and other short-chain alkyl methyl sulfides. The polypeptide is Dimethyl-sulfide monooxygenase (dmoA) (Hyphomicrobium sulfonivorans).